The following is an 817-amino-acid chain: Protein EFR3 homolog B (817 aa).

Ser212, Ser214, and Ser216 each carry phosphoserine.

Belongs to the EFR3 family. In terms of assembly, component of a phosphatidylinositol 4-kinase (PI4K) complex, composed of PI4KA, EFR3 (EFR3A or EFR3B), TTC7 (TTC7A or TTC7B) and HYCC (HYCC1 or HYCC2). Post-translationally, palmitoylated at its N-terminus, anchoring the protein to the plasma membrane. In terms of tissue distribution, widely expressed.

It is found in the cell membrane. It localises to the cytoplasm. The protein localises to the cytosol. Component of a complex required to localize phosphatidylinositol 4-kinase (PI4K) to the plasma membrane. The complex acts as a regulator of phosphatidylinositol 4-phosphate (PtdIns(4)P) synthesis. In the complex, EFR3B probably acts as the membrane-anchoring component. Also involved in responsiveness to G-protein-coupled receptors; it is however unclear whether this role is direct or indirect. The protein is Protein EFR3 homolog B (Efr3b) of Mus musculus (Mouse).